We begin with the raw amino-acid sequence, 188 residues long: uncharacterized protein (188 aa).

This is an uncharacterized protein from Saccharomyces cerevisiae (strain ATCC 204508 / S288c) (Baker's yeast).